The chain runs to 1128 residues: Probable serine/threonine-protein kinase DDB_G0283337 (1128 aa).

A compositionally biased stretch (low complexity) spans 1 to 17 (MENNNNNNINKTNTPNN). Disordered stretches follow at residues 1–21 (MENN…SFSP), 60–100 (INHN…NNNN), 131–151 (RESN…NNSN), 236–256 (NNSK…SNSN), and 375–504 (NDNE…NSEQ). Low complexity-rich tracts occupy residues 243–256 (NSSN…SNSN) and 375–502 (NDNE…NNNS). Residues 777–1054 (LSDFSIIGEG…EIQKCKEEYE (278 aa)) form the Protein kinase domain. ATP contacts are provided by residues 783 to 791 (IGEGGFSTV) and K809. The active-site Proton acceptor is D904.

Belongs to the protein kinase superfamily. Ser/Thr protein kinase family.

The enzyme catalyses L-seryl-[protein] + ATP = O-phospho-L-seryl-[protein] + ADP + H(+). It carries out the reaction L-threonyl-[protein] + ATP = O-phospho-L-threonyl-[protein] + ADP + H(+). In Dictyostelium discoideum (Social amoeba), this protein is Probable serine/threonine-protein kinase DDB_G0283337.